The following is a 302-amino-acid chain: Putative S-adenosyl-L-methionine-dependent methyltransferase MAB_4586c (302 aa).

S-adenosyl-L-methionine contacts are provided by residues D122 and 151 to 152 (DL).

Belongs to the UPF0677 family.

Functionally, exhibits S-adenosyl-L-methionine-dependent methyltransferase activity. The chain is Putative S-adenosyl-L-methionine-dependent methyltransferase MAB_4586c from Mycobacteroides abscessus (strain ATCC 19977 / DSM 44196 / CCUG 20993 / CIP 104536 / JCM 13569 / NCTC 13031 / TMC 1543 / L948) (Mycobacterium abscessus).